Reading from the N-terminus, the 335-residue chain is DNA-directed RNA polymerase subunit alpha (335 aa).

Positions 1-231 (MVREKVTVST…DLFIPFLHME (231 aa)) are alpha N-terminal domain (alpha-NTD). Positions 262–335 (KKKLSLESIF…FALDLPKNLN (74 aa)) are alpha C-terminal domain (alpha-CTD).

This sequence belongs to the RNA polymerase alpha chain family. In terms of assembly, in plastids the minimal PEP RNA polymerase catalytic core is composed of four subunits: alpha, beta, beta', and beta''. When a (nuclear-encoded) sigma factor is associated with the core the holoenzyme is formed, which can initiate transcription.

It is found in the plastid. It carries out the reaction RNA(n) + a ribonucleoside 5'-triphosphate = RNA(n+1) + diphosphate. Functionally, DNA-dependent RNA polymerase catalyzes the transcription of DNA into RNA using the four ribonucleoside triphosphates as substrates. This Cuscuta reflexa (Southern Asian dodder) protein is DNA-directed RNA polymerase subunit alpha.